A 93-amino-acid polypeptide reads, in one-letter code: Acylphosphatase (93 aa).

An Acylphosphatase-like domain is found at 5–93; the sequence is TAILRVTGFV…EDRKTFDIVY (89 aa). Active-site residues include Arg20 and Asn38.

Belongs to the acylphosphatase family.

The enzyme catalyses an acyl phosphate + H2O = a carboxylate + phosphate + H(+). This chain is Acylphosphatase (acyP), found in Listeria welshimeri serovar 6b (strain ATCC 35897 / DSM 20650 / CCUG 15529 / CIP 8149 / NCTC 11857 / SLCC 5334 / V8).